The chain runs to 142 residues: Large ribosomal subunit protein uL11 (142 aa).

This sequence belongs to the universal ribosomal protein uL11 family. Part of the ribosomal stalk of the 50S ribosomal subunit. Interacts with L10 and the large rRNA to form the base of the stalk. L10 forms an elongated spine to which L12 dimers bind in a sequential fashion forming a multimeric L10(L12)X complex. In terms of processing, one or more lysine residues are methylated.

Its function is as follows. Forms part of the ribosomal stalk which helps the ribosome interact with GTP-bound translation factors. This is Large ribosomal subunit protein uL11 from Histophilus somni (strain 129Pt) (Haemophilus somnus).